Consider the following 229-residue polypeptide: Prolactin (229 aa).

The signal sequence occupies residues 1-30 (MDNKGWSLKGSLLPLLLLVSDLLLCQGVTS). Cys-34 and Cys-41 are disulfide-bonded. Phosphoserine is present on residues Ser-56, Ser-64, and Ser-120. Intrachain disulfides connect Cys-88–Cys-204 and Cys-221–Cys-229.

Belongs to the somatotropin/prolactin family. In terms of assembly, interacts with PRLR.

It localises to the secreted. Its function is as follows. Prolactin acts primarily on the mammary gland by promoting lactation. In Neovison vison (American mink), this protein is Prolactin (PRL).